The sequence spans 107 residues: UPF0145 protein MAB_3451c (107 aa).

Belongs to the UPF0145 family.

The chain is UPF0145 protein MAB_3451c from Mycobacteroides abscessus (strain ATCC 19977 / DSM 44196 / CCUG 20993 / CIP 104536 / JCM 13569 / NCTC 13031 / TMC 1543 / L948) (Mycobacterium abscessus).